Here is a 556-residue protein sequence, read N- to C-terminus: Glucose-6-phosphate isomerase (556 aa).

The active-site Proton donor is the Glu-360. Catalysis depends on residues His-391 and Lys-519.

The protein belongs to the GPI family.

Its subcellular location is the cytoplasm. It catalyses the reaction alpha-D-glucose 6-phosphate = beta-D-fructose 6-phosphate. It functions in the pathway carbohydrate biosynthesis; gluconeogenesis. The protein operates within carbohydrate degradation; glycolysis; D-glyceraldehyde 3-phosphate and glycerone phosphate from D-glucose: step 2/4. Functionally, catalyzes the reversible isomerization of glucose-6-phosphate to fructose-6-phosphate. The protein is Glucose-6-phosphate isomerase of Acinetobacter baumannii (strain ATCC 17978 / DSM 105126 / CIP 53.77 / LMG 1025 / NCDC KC755 / 5377).